Reading from the N-terminus, the 508-residue chain is Aldehyde dehydrogenase family 7 member A1 (508 aa).

244–249 (GSSKVG) lines the NAD(+) pocket. Catalysis depends on E266, which acts as the Proton acceptor. Residue C300 is the Nucleophile of the active site.

Belongs to the aldehyde dehydrogenase family. As to quaternary structure, homotetramer.

It carries out the reaction an aldehyde + NAD(+) + H2O = a carboxylate + NADH + 2 H(+). The polypeptide is Aldehyde dehydrogenase family 7 member A1 (Pisum sativum (Garden pea)).